The chain runs to 379 residues: UDP-4-amino-4-deoxy-L-arabinose--oxoglutarate aminotransferase (379 aa).

N6-(pyridoxal phosphate)lysine is present on lysine 182.

The protein belongs to the DegT/DnrJ/EryC1 family. ArnB subfamily. As to quaternary structure, homodimer. It depends on pyridoxal 5'-phosphate as a cofactor.

The enzyme catalyses UDP-4-amino-4-deoxy-beta-L-arabinose + 2-oxoglutarate = UDP-beta-L-threo-pentopyranos-4-ulose + L-glutamate. It participates in nucleotide-sugar biosynthesis; UDP-4-deoxy-4-formamido-beta-L-arabinose biosynthesis; UDP-4-deoxy-4-formamido-beta-L-arabinose from UDP-alpha-D-glucuronate: step 2/3. It functions in the pathway bacterial outer membrane biogenesis; lipopolysaccharide biosynthesis. Functionally, catalyzes the conversion of UDP-4-keto-arabinose (UDP-Ara4O) to UDP-4-amino-4-deoxy-L-arabinose (UDP-L-Ara4N). The modified arabinose is attached to lipid A and is required for resistance to polymyxin and cationic antimicrobial peptides. The polypeptide is UDP-4-amino-4-deoxy-L-arabinose--oxoglutarate aminotransferase (Escherichia coli (strain K12 / DH10B)).